Reading from the N-terminus, the 219-residue chain is Bacterial microcompartment shell protein EutL (219 aa).

BMC circularly permuted domains follow at residues 1–113 (MPAL…GAAF) and 114–215 (QWAN…ARNP). Residues Asp-45, Asp-46, Glu-83, and Phe-113 each contribute to the ethanolamine site. The segment at 45 to 46 (DD) is part of the acidic patch lining the small pore. Glu-157 contacts Zn(2+). Residue 183-185 (TNY) coordinates ethanolamine.

The protein belongs to the EutL/PduB family. In terms of assembly, homotrimerizes to form a pseudohexamer. The trimers form a two-dimensional array about 37 Angstroms thick.

It is found in the bacterial microcompartment. Its pathway is amine and polyamine degradation; ethanolamine degradation. In terms of biological role, a component of the bacterial microcompartment (BMC) shell dedicated to ethanolamine degradation. Two crystal forms have been seen; a form with a closed central pore that has 3 very small (1.1-2.2 Angstroms) channels per trimer lined by acidic and aromatic residues. A form with a large central pore (8-12 Angstroms) has also been seen; this is probably a functional pore which allows molecules to enter and exit the BMC in a selective, gated manner. Another group only sees the central pore in the presence of Zn(2+); soaking crystals in ZnCl(2) leads to dramatic conformational changes that open a central pore of about 12 Angstroms. Whether Zn(2+) binding is physiologically relevant is unclear, however it suggests a gating mechanism exists. Ethanolamine-binding by the small channels has been hypothesized to stabilize the EutL central pore in a closed (non-transporting) state. An open pore is thought to be large enough to transport ATP and/or cobalamin. This chain is Bacterial microcompartment shell protein EutL (eutL), found in Escherichia coli (strain K12).